The sequence spans 61 residues: Sec-independent protein translocase protein TatA (61 aa).

A helical membrane pass occupies residues Met-1–Gly-21.

It belongs to the TatA/E family. In terms of assembly, the Tat system comprises two distinct complexes: a TatABC complex, containing multiple copies of TatA, TatB and TatC subunits, and a separate TatA complex, containing only TatA subunits. Substrates initially bind to the TatABC complex, which probably triggers association of the separate TatA complex to form the active translocon.

It is found in the cell inner membrane. Part of the twin-arginine translocation (Tat) system that transports large folded proteins containing a characteristic twin-arginine motif in their signal peptide across membranes. TatA could form the protein-conducting channel of the Tat system. The polypeptide is Sec-independent protein translocase protein TatA (Syntrophus aciditrophicus (strain SB)).